We begin with the raw amino-acid sequence, 251 residues long: 5'-nucleotidase SurE (251 aa).

D8, D9, S39, and N95 together coordinate a divalent metal cation.

This sequence belongs to the SurE nucleotidase family. Requires a divalent metal cation as cofactor.

It localises to the cytoplasm. It carries out the reaction a ribonucleoside 5'-phosphate + H2O = a ribonucleoside + phosphate. Its function is as follows. Nucleotidase that shows phosphatase activity on nucleoside 5'-monophosphates. The protein is 5'-nucleotidase SurE of Ralstonia pickettii (strain 12J).